Here is a 137-residue protein sequence, read N- to C-terminus: Large ribosomal subunit protein bL17 (137 aa).

Belongs to the bacterial ribosomal protein bL17 family. As to quaternary structure, part of the 50S ribosomal subunit. Contacts protein L32.

The protein is Large ribosomal subunit protein bL17 of Bradyrhizobium sp. (strain BTAi1 / ATCC BAA-1182).